Reading from the N-terminus, the 436-residue chain is Repulsive guidance molecule B (436 aa).

The signal sequence occupies residues 1-48; that stretch reads MGVRAAPSCAAAPAAAGAEQSRRPGLWPPSPPPPLLLLLLLSLGLLHA. Residue asparagine 123 is glycosylated (N-linked (GlcNAc...) asparagine). Cystine bridges form between cysteine 142–cysteine 229 and cysteine 166–cysteine 315. Residue asparagine 386 is glycosylated (N-linked (GlcNAc...) asparagine). The GPI-anchor amidated cysteine moiety is linked to residue cysteine 415. Positions 416 to 436 are cleaved as a propeptide — removed in mature form; the sequence is GGCRDLPVGLGLTCLILIMFL.

It belongs to the repulsive guidance molecule (RGM) family. Homooligomer. Interacts with DRGX. Interacts with BMP2 and BMP4. Interacts with the BMP type I receptors ACVR1, BMPR1A and BMPR1B and with the BMP type II receptor ACVR2B. The functional complex with its receptor NEO1/neogenin appears to be a heterotetramer with a 2:2 stoichiometry, RGM molecules acting as staples that bring two NEO1 receptors together without interacting themselves, this arrangement leads to activation of downstream signaling via RhoA. In terms of processing, GPI-anchored. Post-translationally, autocatalytically cleaved at low pH; the two chains remain linked via two disulfide bonds. As to expression, detected in neonatal and adult dorsal root ganglion sensory neurons, spinal cord, and brain (at protein level). Also expressed at high levels in retinal ganglion cells of developing mouse, extending to the optic nerve (at protein level). Expressed in testis, epididymis, ovary, uterus, and pituitary.

Its subcellular location is the cell membrane. The protein localises to the membrane raft. Functionally, member of the repulsive guidance molecule (RGM) family that contributes to the patterning of the developing nervous system. Acts as a bone morphogenetic protein (BMP) coreceptor that potentiates BMP signaling. Promotes neuronal adhesion. May inhibit neurite outgrowth. The sequence is that of Repulsive guidance molecule B from Mus musculus (Mouse).